The following is a 240-amino-acid chain: Serine protease SplB (240 aa).

Residues 1-36 form the signal peptide; the sequence is MNKNVVIKSLATLTILTSVTGIGTTLVEEVQQTAKA. Residues H75, D113, and S193 each act as charge relay system in the active site.

Belongs to the peptidase S1B family.

The protein resides in the secreted. Its function is as follows. Serine protease that cleaves specifically after the sequence Trp-Glu-Leu-Gln. This Staphylococcus aureus (strain Mu3 / ATCC 700698) protein is Serine protease SplB (splB).